The following is a 143-amino-acid chain: Transcription antitermination protein NusB (143 aa).

It belongs to the NusB family.

Functionally, involved in transcription antitermination. Required for transcription of ribosomal RNA (rRNA) genes. Binds specifically to the boxA antiterminator sequence of the ribosomal RNA (rrn) operons. This chain is Transcription antitermination protein NusB, found in Desulforapulum autotrophicum (strain ATCC 43914 / DSM 3382 / VKM B-1955 / HRM2) (Desulfobacterium autotrophicum).